We begin with the raw amino-acid sequence, 815 residues long: Lon protease 1 (815 aa).

One can recognise a Lon N-terminal domain in the interval 14–211 (IAILPLLGTV…KLNEVLTREL (198 aa)). Residue 370–377 (GPPGVGKT) coordinates ATP. Positions 606–787 (TDRPGIVTGL…GQVIELALRA (182 aa)) constitute a Lon proteolytic domain. Active-site residues include Ser693 and Lys736.

It belongs to the peptidase S16 family. As to quaternary structure, homohexamer. Organized in a ring with a central cavity.

Its subcellular location is the cytoplasm. The enzyme catalyses Hydrolysis of proteins in presence of ATP.. ATP-dependent serine protease that mediates the selective degradation of mutant and abnormal proteins as well as certain short-lived regulatory proteins. Required for cellular homeostasis and for survival from DNA damage and developmental changes induced by stress. Degrades polypeptides processively to yield small peptide fragments that are 5 to 10 amino acids long. Binds to DNA in a double-stranded, site-specific manner. The chain is Lon protease 1 from Herpetosiphon aurantiacus (strain ATCC 23779 / DSM 785 / 114-95).